Reading from the N-terminus, the 498-residue chain is uncharacterized protein (498 aa).

The first 26 residues, 1–26, serve as a signal peptide directing secretion; it reads MEESSMAQASLICLLLSFSIIMLSNA. At 27-441 the chain is on the extracellular side; sequence ADISIDCGSS…GEEKSSSNLA (415 aa). N-linked (GlcNAc...) asparagine glycans are attached at residues Asn44, Asn150, Asn354, and Asn357. The tract at residues 351-439 is disordered; it reads GSGNGTNSTS…KSGEEKSSSN (89 aa). A compositionally biased stretch (gly residues) spans 362 to 414; it reads SGGGSPSPGGGSGSPPSTGGGSGSPPSTGGGGGSPSKGGGGGKSGGSNNGDGG. Positions 418–436 are enriched in basic and acidic residues; it reads ASEDEKSADSSGKSGEEKS. A helical membrane pass occupies residues 442 to 462; the sequence is LPLGISLPTLLSLGAGGWGVW. The Cytoplasmic portion of the chain corresponds to 463-498; that stretch reads KYFIKPRRHPESELPLKQNISLQVNMGNATVVNAGQ.

It localises to the membrane. This is an uncharacterized protein from Arabidopsis thaliana (Mouse-ear cress).